Consider the following 304-residue polypeptide: Non-specific ribonucleoside hydrolase RihC (304 aa).

Residue His233 is part of the active site.

Belongs to the IUNH family. RihC subfamily.

Its function is as follows. Hydrolyzes both purine and pyrimidine ribonucleosides with a broad-substrate specificity. The sequence is that of Non-specific ribonucleoside hydrolase RihC from Escherichia fergusonii (strain ATCC 35469 / DSM 13698 / CCUG 18766 / IAM 14443 / JCM 21226 / LMG 7866 / NBRC 102419 / NCTC 12128 / CDC 0568-73).